A 243-amino-acid polypeptide reads, in one-letter code: Segregation and condensation protein A (243 aa).

The protein belongs to the ScpA family. Component of a cohesin-like complex composed of ScpA, ScpB and the Smc homodimer, in which ScpA and ScpB bind to the head domain of Smc. The presence of the three proteins is required for the association of the complex with DNA.

Its subcellular location is the cytoplasm. Its function is as follows. Participates in chromosomal partition during cell division. May act via the formation of a condensin-like complex containing Smc and ScpB that pull DNA away from mid-cell into both cell halves. This chain is Segregation and condensation protein A, found in Thermoanaerobacter pseudethanolicus (strain ATCC 33223 / 39E) (Clostridium thermohydrosulfuricum).